Reading from the N-terminus, the 470-residue chain is Cell division protein FtsA (470 aa).

The disordered stretch occupies residues 416-470; the sequence is NKKDTHENEVESTDEEIYQSEDNHQEHKQNHEHVQDKDKDKEESKFKKLMKSLFE. Acidic residues predominate over residues 425-434; it reads VESTDEEIYQ. The segment covering 436-461 has biased composition (basic and acidic residues); it reads EDNHQEHKQNHEHVQDKDKDKEESKF.

The protein belongs to the FtsA/MreB family. As to quaternary structure, self-interacts. Interacts with FtsZ.

It is found in the cell membrane. Cell division protein that is involved in the assembly of the Z ring. May serve as a membrane anchor for the Z ring. In Staphylococcus aureus (strain MSSA476), this protein is Cell division protein FtsA.